The primary structure comprises 417 residues: Serine hydroxymethyltransferase 1 (417 aa).

(6S)-5,6,7,8-tetrahydrofolate is bound by residues Leu-121 and 125 to 127; that span reads GHL. Lys-229 is subject to N6-(pyridoxal phosphate)lysine. A (6S)-5,6,7,8-tetrahydrofolate-binding site is contributed by 354–356; it reads SPF.

The protein belongs to the SHMT family. In terms of assembly, homodimer. It depends on pyridoxal 5'-phosphate as a cofactor.

The protein localises to the cytoplasm. The catalysed reaction is (6R)-5,10-methylene-5,6,7,8-tetrahydrofolate + glycine + H2O = (6S)-5,6,7,8-tetrahydrofolate + L-serine. It functions in the pathway one-carbon metabolism; tetrahydrofolate interconversion. It participates in amino-acid biosynthesis; glycine biosynthesis; glycine from L-serine: step 1/1. In terms of biological role, catalyzes the reversible interconversion of serine and glycine with tetrahydrofolate (THF) serving as the one-carbon carrier. This reaction serves as the major source of one-carbon groups required for the biosynthesis of purines, thymidylate, methionine, and other important biomolecules. Also exhibits THF-independent aldolase activity toward beta-hydroxyamino acids, producing glycine and aldehydes, via a retro-aldol mechanism. This chain is Serine hydroxymethyltransferase 1, found in Pseudomonas fluorescens (strain ATCC BAA-477 / NRRL B-23932 / Pf-5).